The following is a 301-amino-acid chain: 4-hydroxy-tetrahydrodipicolinate synthase (301 aa).

Residue T46 participates in pyruvate binding. Y134 (proton donor/acceptor) is an active-site residue. The active-site Schiff-base intermediate with substrate is the K162. Position 203 (I203) interacts with pyruvate.

The protein belongs to the DapA family. As to quaternary structure, homotetramer; dimer of dimers.

The protein resides in the cytoplasm. The enzyme catalyses L-aspartate 4-semialdehyde + pyruvate = (2S,4S)-4-hydroxy-2,3,4,5-tetrahydrodipicolinate + H2O + H(+). It participates in amino-acid biosynthesis; L-lysine biosynthesis via DAP pathway; (S)-tetrahydrodipicolinate from L-aspartate: step 3/4. Catalyzes the condensation of (S)-aspartate-beta-semialdehyde [(S)-ASA] and pyruvate to 4-hydroxy-tetrahydrodipicolinate (HTPA). In Anaplasma marginale (strain Florida), this protein is 4-hydroxy-tetrahydrodipicolinate synthase.